The sequence spans 220 residues: uncharacterized protein (220 aa).

The next 7 helical transmembrane spans lie at Tyr25 to Leu45, Pro50 to Ser70, Leu74 to Leu94, Ile105 to Leu125, Ser135 to Phe155, Pro158 to Tyr178, and Val196 to Leu216.

It belongs to the BI1 family.

Its subcellular location is the cell membrane. This is an uncharacterized protein from Pasteurella multocida (strain Pm70).